We begin with the raw amino-acid sequence, 154 residues long: Superoxide dismutase [Cu-Zn] 1 (154 aa).

Positions 47, 49, and 64 each coordinate Cu cation. Cys58 and Cys147 are joined by a disulfide. Zn(2+) contacts are provided by His64, His72, His81, and Asp84. Residue His121 participates in Cu cation binding. A substrate-binding site is contributed by Arg144.

It belongs to the Cu-Zn superoxide dismutase family. Homodimer. It depends on Cu cation as a cofactor. The cofactor is Zn(2+).

It is found in the cytoplasm. The catalysed reaction is 2 superoxide + 2 H(+) = H2O2 + O2. Functionally, destroys radicals which are normally produced within the cells and which are toxic to biological systems. In Debaryomyces hansenii (strain ATCC 36239 / CBS 767 / BCRC 21394 / JCM 1990 / NBRC 0083 / IGC 2968) (Yeast), this protein is Superoxide dismutase [Cu-Zn] 1 (SOD1).